We begin with the raw amino-acid sequence, 71 residues long: Small, acid-soluble spore protein 2 (71 aa).

It belongs to the alpha/beta-type SASP family.

SASP are bound to spore DNA. They are double-stranded DNA-binding proteins that cause DNA to change to an a-like conformation. They protect the DNA backbone from chemical and enzymatic cleavage and are thus involved in dormant spore's high resistance to UV light. This Bacillus subtilis protein is Small, acid-soluble spore protein 2.